Reading from the N-terminus, the 316-residue chain is MTETFQHISVLLNESIDGLAIKPDGIYIDGTFGRGGHSRTILSKLGENGRLYSIDRDPQAIAEAAKIDDPRFTIIHGPFSGMAKYAEEYGLVGKVDGVLLDLGVSSPQLDDAERGFSFMKDGPLDMRMDPTSGIPVSQWLMEADLDDITWVIREFGEDKHARRIAKAIVAYREDEENEPMVRTGQLAKLISDAAPKSFKEKKHPATRAFQAFRIYINSELEEIDTALKGAASILAPEGRLSVISFHSLEDRMVKRFIRKESKGPEVPHGIPMTEEQIRALGSANMKPIGKANKPTKQEIDMNPRSRSSVLRIAEKL.

Residues G35–H37, D55, F79, D101, and Q108 each bind S-adenosyl-L-methionine.

This sequence belongs to the methyltransferase superfamily. RsmH family.

The protein resides in the cytoplasm. The catalysed reaction is cytidine(1402) in 16S rRNA + S-adenosyl-L-methionine = N(4)-methylcytidine(1402) in 16S rRNA + S-adenosyl-L-homocysteine + H(+). Functionally, specifically methylates the N4 position of cytidine in position 1402 (C1402) of 16S rRNA. The protein is Ribosomal RNA small subunit methyltransferase H of Vibrio campbellii (strain ATCC BAA-1116).